The primary structure comprises 154 residues: Jupiter microtubule associated homolog 1 (154 aa).

The residue at position 1 (Met-1) is an N-acetylmethionine. Positions 1-19 are enriched in polar residues; it reads MTTTTTFKGVDPNSRNSSR. Residues 1–154 are disordered; it reads MTTTTTFKGV…PGGKSSLVLG (154 aa). Thr-2 bears the N-acetylthreonine; in Hematological and neurological expressed 1 protein, N-terminally processed mark. Phosphoserine occurs at positions 28 and 31. Thr-54 is modified (phosphothreonine). Residues Ser-71, Ser-87, Ser-88, and Ser-92 each carry the phosphoserine modification. The span at 79–91 shows a compositional bias: polar residues; sequence SPGTQRSNSSEAS. The span at 96-108 shows a compositional bias: basic and acidic residues; sequence LDLKGEGDMHENV. Over residues 125–138 the composition is skewed to pro residues; the sequence is PAAPVPSPVAPAPV. Phosphoserine is present on Ser-131. Lys-148 is modified (N6-acetyllysine).

This sequence belongs to the JUPITER family. Interacts with the complex composed, at least, of APC, CTNNB1 and GSK3B; the interaction takes place with the inactive form of GSK3B (phosphorylated at 'Ser-9'). Expressed in yolk sac, fetal brain, brain, spleen and bone marrow.

It localises to the nucleus. The protein localises to the cytoplasm. Its function is as follows. Modulates negatively AKT-mediated GSK3B signaling. Induces CTNNB1 'Ser-33' phosphorylation and degradation through the suppression of the inhibitory 'Ser-9' phosphorylation of GSK3B, which represses the function of the APC:CTNNB1:GSK3B complex and the interaction with CDH1/E-cadherin in adherent junctions. Plays a role in the regulation of cell cycle and cell adhesion. Has an inhibitory role on AR-signaling pathway through the induction of receptor proteasomal degradation. The polypeptide is Jupiter microtubule associated homolog 1 (Mus musculus (Mouse)).